Here is a 207-residue protein sequence, read N- to C-terminus: Small ribosomal subunit protein uS4 (207 aa).

Residues 20-45 (TPKAARYMEKRPYAPGEHGRTKRKAD) are disordered. One can recognise an S4 RNA-binding domain in the interval 93–158 (MRLDALVLRA…TEPFQVAAAG (66 aa)).

The protein belongs to the universal ribosomal protein uS4 family. In terms of assembly, part of the 30S ribosomal subunit. Contacts protein S5. The interaction surface between S4 and S5 is involved in control of translational fidelity.

Functionally, one of the primary rRNA binding proteins, it binds directly to 16S rRNA where it nucleates assembly of the body of the 30S subunit. In terms of biological role, with S5 and S12 plays an important role in translational accuracy. This is Small ribosomal subunit protein uS4 from Leifsonia xyli subsp. xyli (strain CTCB07).